The sequence spans 330 residues: Aspartate--ammonia ligase (330 aa).

Belongs to the class-II aminoacyl-tRNA synthetase family. AsnA subfamily.

The protein localises to the cytoplasm. It carries out the reaction L-aspartate + NH4(+) + ATP = L-asparagine + AMP + diphosphate + H(+). It functions in the pathway amino-acid biosynthesis; L-asparagine biosynthesis; L-asparagine from L-aspartate (ammonia route): step 1/1. The protein is Aspartate--ammonia ligase of Escherichia coli (strain SMS-3-5 / SECEC).